The chain runs to 127 residues: Large ribosomal subunit protein uL18 (127 aa).

The disordered stretch occupies residues 1-26 (MASTLTVRKSLSDRAKARARRQARGR). Over residues 17 to 26 (ARARRQARGR) the composition is skewed to basic residues.

The protein belongs to the universal ribosomal protein uL18 family. Part of the 50S ribosomal subunit; part of the 5S rRNA/L5/L18/L25 subcomplex. Contacts the 5S and 23S rRNAs.

In terms of biological role, this is one of the proteins that bind and probably mediate the attachment of the 5S RNA into the large ribosomal subunit, where it forms part of the central protuberance. In Cutibacterium acnes (strain DSM 16379 / KPA171202) (Propionibacterium acnes), this protein is Large ribosomal subunit protein uL18.